The sequence spans 484 residues: Malonate-semialdehyde dehydrogenase 1 (484 aa).

NAD(+) contacts are provided by Phe153, Lys177, Glu180, Arg181, Ser230, and Thr252. Cys285 acts as the Nucleophile in catalysis. Residue Glu385 coordinates NAD(+).

Belongs to the aldehyde dehydrogenase family. IolA subfamily. Homotetramer.

It catalyses the reaction 3-oxopropanoate + NAD(+) + CoA + H2O = hydrogencarbonate + acetyl-CoA + NADH + H(+). It carries out the reaction 2-methyl-3-oxopropanoate + NAD(+) + CoA + H2O = propanoyl-CoA + hydrogencarbonate + NADH + H(+). Its pathway is polyol metabolism; myo-inositol degradation into acetyl-CoA; acetyl-CoA from myo-inositol: step 7/7. In terms of biological role, catalyzes the oxidation of malonate semialdehyde (MSA) and methylmalonate semialdehyde (MMSA) into acetyl-CoA and propanoyl-CoA, respectively. Is involved in a myo-inositol catabolic pathway. Bicarbonate, and not CO2, is the end-product of the enzymatic reaction. This Geobacillus thermodenitrificans (strain NG80-2) protein is Malonate-semialdehyde dehydrogenase 1.